Consider the following 248-residue polypeptide: N-acylneuraminate-9-phosphatase (248 aa).

A Mg(2+)-binding site is contributed by Asp-12. Leu-13, Asp-14, Thr-131, Asn-132, and Lys-164 together coordinate phosphate. Residue Asp-14 coordinates Mg(2+). Asp-189 is a binding site for Mg(2+).

It belongs to the HAD-like hydrolase superfamily. NANP family. Requires Mg(2+) as cofactor.

The catalysed reaction is N-acetylneuraminate 9-phosphate + H2O = N-acetylneuraminate + phosphate. It catalyses the reaction N-glycoloylneuraminate 9-phosphate + H2O = N-glycoloylneuraminate + phosphate. It functions in the pathway amino-sugar metabolism; N-acetylneuraminate biosynthesis. With respect to regulation, inhibited by calcium. Inhibited by vanadate, sodium orthovanadate and phosphonate. Functionally, catalyzes the dephosphorylation of N-acylneuraminate 9-phosphate (Neu5Ac-9-P) to N-acetylneuraminic acid (Neu5Ac or sialic acid). Can also use N-glycoloylneuraminate 9-phosphate as substrate. This Rattus norvegicus (Rat) protein is N-acylneuraminate-9-phosphatase.